We begin with the raw amino-acid sequence, 241 residues long: Octanoyltransferase (241 aa).

The BPL/LPL catalytic domain maps to 49-233; the sequence is GEASELVWLL…AFGEVFGPSE (185 aa). Residues 87–94, 162–164, and 175–177 each bind substrate; these read RGGQVTYH, AIG, and GIS. Residue cysteine 193 is the Acyl-thioester intermediate of the active site.

The protein belongs to the LipB family.

The protein localises to the cytoplasm. It carries out the reaction octanoyl-[ACP] + L-lysyl-[protein] = N(6)-octanoyl-L-lysyl-[protein] + holo-[ACP] + H(+). Its pathway is protein modification; protein lipoylation via endogenous pathway; protein N(6)-(lipoyl)lysine from octanoyl-[acyl-carrier-protein]: step 1/2. Catalyzes the transfer of endogenously produced octanoic acid from octanoyl-acyl-carrier-protein onto the lipoyl domains of lipoate-dependent enzymes. Lipoyl-ACP can also act as a substrate although octanoyl-ACP is likely to be the physiological substrate. In Nitrobacter hamburgensis (strain DSM 10229 / NCIMB 13809 / X14), this protein is Octanoyltransferase.